We begin with the raw amino-acid sequence, 232 residues long: LexA repressor (232 aa).

Positions 1–25 are disordered; it reads MSDDSSDSTDAPGTSRSRDSGLTER. The segment covering 16–25 has biased composition (basic and acidic residues); that stretch reads RSRDSGLTER. The segment at residues 46–66 is a DNA-binding region (H-T-H motif); sequence IREIGDAVGLTSTSSVAHQLR. Active-site for autocatalytic cleavage activity residues include Ser156 and Lys193.

It belongs to the peptidase S24 family. In terms of assembly, homodimer.

It catalyses the reaction Hydrolysis of Ala-|-Gly bond in repressor LexA.. Functionally, represses a number of genes involved in the response to DNA damage (SOS response), including recA and lexA. In the presence of single-stranded DNA, RecA interacts with LexA causing an autocatalytic cleavage which disrupts the DNA-binding part of LexA, leading to derepression of the SOS regulon and eventually DNA repair. The polypeptide is LexA repressor (Mycolicibacterium gilvum (strain PYR-GCK) (Mycobacterium gilvum (strain PYR-GCK))).